A 439-amino-acid polypeptide reads, in one-letter code: Ribosomal protein uS12 methylthiotransferase RimO (439 aa).

An MTTase N-terminal domain is found at 5-115; the sequence is PKIGFVSLGC…LIEAVHTHAP (111 aa). Positions 14, 50, 79, 146, 150, and 153 each coordinate [4Fe-4S] cluster. Positions 132 to 369 constitute a Radical SAM core domain; that stretch reads LTPRHYSYLK…MGLQAQISAD (238 aa). The region spanning 372–439 is the TRAM domain; the sequence is QRFVGTEQQV…ESTEYDLIAD (68 aa).

The protein belongs to the methylthiotransferase family. RimO subfamily. The cofactor is [4Fe-4S] cluster.

It localises to the cytoplasm. It carries out the reaction L-aspartate(89)-[ribosomal protein uS12]-hydrogen + (sulfur carrier)-SH + AH2 + 2 S-adenosyl-L-methionine = 3-methylsulfanyl-L-aspartate(89)-[ribosomal protein uS12]-hydrogen + (sulfur carrier)-H + 5'-deoxyadenosine + L-methionine + A + S-adenosyl-L-homocysteine + 2 H(+). In terms of biological role, catalyzes the methylthiolation of an aspartic acid residue of ribosomal protein uS12. This is Ribosomal protein uS12 methylthiotransferase RimO from Francisella philomiragia subsp. philomiragia (strain ATCC 25017 / CCUG 19701 / FSC 153 / O#319-036).